Reading from the N-terminus, the 457-residue chain is Acetylcholine receptor subunit alpha (457 aa).

The signal sequence occupies residues 1 to 20; sequence MELSTVLLLLGLCSAGLVLG. The Extracellular segment spans residues 21-230; the sequence is SEHETRLVAK…ITYHFVMQRL (210 aa). Intrachain disulfides connect C148/C162 and C212/C213. N161 is a glycosylation site (N-linked (GlcNAc...) asparagine). Transmembrane regions (helical) follow at residues 231 to 255, 263 to 281, and 297 to 316; these read PLYF…VFYL, MTLS…LVIV, and YMLF…VIVI. The Cytoplasmic segment spans residues 317–428; the sequence is NTHHRSPSTH…WKYVAMVMDH (112 aa). A helical membrane pass occupies residues 429-447; it reads ILLGVFMLVCLIGTLAVFA.

Belongs to the ligand-gated ion channel (TC 1.A.9) family. Acetylcholine receptor (TC 1.A.9.1) subfamily. Alpha-1/CHRNA1 sub-subfamily. In terms of assembly, one of the alpha chains that assemble within the acetylcholine receptor, a pentamer of two alpha chains, a beta, a delta, and a gamma (in immature muscle) or epsilon (in mature muscle) chains. The muscle heteropentamer composed of alpha-1, beta-1, delta, epsilon subunits interacts with the alpha-conotoxin ImII.

Its subcellular location is the postsynaptic cell membrane. It is found in the cell membrane. It carries out the reaction K(+)(in) = K(+)(out). It catalyses the reaction Na(+)(in) = Na(+)(out). Functionally, upon acetylcholine binding, the AChR responds by an extensive change in conformation that affects all subunits and leads to opening of an ion-conducting channel across the plasma membrane. The sequence is that of Acetylcholine receptor subunit alpha (Chrna1) from Mus musculus (Mouse).